A 119-amino-acid polypeptide reads, in one-letter code: Large ribosomal subunit protein uL18 (119 aa).

This sequence belongs to the universal ribosomal protein uL18 family. As to quaternary structure, part of the 50S ribosomal subunit; part of the 5S rRNA/L5/L18/L25 subcomplex. Contacts the 5S and 23S rRNAs.

This is one of the proteins that bind and probably mediate the attachment of the 5S RNA into the large ribosomal subunit, where it forms part of the central protuberance. The protein is Large ribosomal subunit protein uL18 of Clostridium botulinum (strain 657 / Type Ba4).